The chain runs to 231 residues: tRNA (guanine-N(1)-)-methyltransferase (231 aa).

S-adenosyl-L-methionine is bound by residues glycine 109 and isoleucine 133–leucine 138.

Belongs to the RNA methyltransferase TrmD family. In terms of assembly, homodimer.

Its subcellular location is the cytoplasm. The catalysed reaction is guanosine(37) in tRNA + S-adenosyl-L-methionine = N(1)-methylguanosine(37) in tRNA + S-adenosyl-L-homocysteine + H(+). Functionally, specifically methylates guanosine-37 in various tRNAs. This chain is tRNA (guanine-N(1)-)-methyltransferase, found in Nocardia farcinica (strain IFM 10152).